A 92-amino-acid chain; its full sequence is Small ribosomal subunit protein uS19 (92 aa).

Belongs to the universal ribosomal protein uS19 family.

Functionally, protein S19 forms a complex with S13 that binds strongly to the 16S ribosomal RNA. The chain is Small ribosomal subunit protein uS19 from Rickettsia felis (strain ATCC VR-1525 / URRWXCal2) (Rickettsia azadi).